A 482-amino-acid chain; its full sequence is GDP-D-glucose phosphorylase 1 (482 aa).

Positions 1-21 are disordered; it reads MEPFPRILDDRLPRNMRRPRP. The active-site Tele-GMP-histidine intermediate is H255. The segment at 461–482 is disordered; it reads MPRSPSIRHRSSTRAQSDEGSK.

It belongs to the GDPGP1 family. In terms of tissue distribution, expressed throughout the neuronal system, in the spermatheca and anterior hypodermal cells.

It is found in the cytoplasm. It catalyses the reaction GDP-alpha-D-glucose + phosphate = alpha-D-glucose 1-phosphate + GDP + H(+). In terms of biological role, specific and highly efficient GDP-D-glucose phosphorylase regulating the levels of GDP-D-glucose in cells. The sequence is that of GDP-D-glucose phosphorylase 1 from Caenorhabditis elegans.